Here is a 132-residue protein sequence, read N- to C-terminus: Large ribosomal subunit protein bL12 (132 aa).

Belongs to the bacterial ribosomal protein bL12 family. Homodimer. Part of the ribosomal stalk of the 50S ribosomal subunit. Forms a multimeric L10(L12)X complex, where L10 forms an elongated spine to which 2 to 4 L12 dimers bind in a sequential fashion. Binds GTP-bound translation factors.

Functionally, forms part of the ribosomal stalk which helps the ribosome interact with GTP-bound translation factors. Is thus essential for accurate translation. The protein is Large ribosomal subunit protein bL12 of Chloroflexus aggregans (strain MD-66 / DSM 9485).